Reading from the N-terminus, the 432-residue chain is D-amino acid dehydrogenase (432 aa).

3 to 17 (VVILGSGVVGVASAW) contacts FAD.

This sequence belongs to the DadA oxidoreductase family. It depends on FAD as a cofactor.

It carries out the reaction a D-alpha-amino acid + A + H2O = a 2-oxocarboxylate + AH2 + NH4(+). Its pathway is amino-acid degradation; D-alanine degradation; NH(3) and pyruvate from D-alanine: step 1/1. Functionally, oxidative deamination of D-amino acids. The sequence is that of D-amino acid dehydrogenase from Escherichia coli O45:K1 (strain S88 / ExPEC).